The chain runs to 427 residues: Glutamate-1-semialdehyde 2,1-aminomutase (427 aa).

Lys268 carries the N6-(pyridoxal phosphate)lysine modification.

Belongs to the class-III pyridoxal-phosphate-dependent aminotransferase family. HemL subfamily. Pyridoxal 5'-phosphate is required as a cofactor.

The protein resides in the cytoplasm. The catalysed reaction is (S)-4-amino-5-oxopentanoate = 5-aminolevulinate. It functions in the pathway porphyrin-containing compound metabolism; protoporphyrin-IX biosynthesis; 5-aminolevulinate from L-glutamyl-tRNA(Glu): step 2/2. The chain is Glutamate-1-semialdehyde 2,1-aminomutase from Methanococcus vannielii (strain ATCC 35089 / DSM 1224 / JCM 13029 / OCM 148 / SB).